A 366-amino-acid polypeptide reads, in one-letter code: Aminomethyltransferase (366 aa).

It belongs to the GcvT family. In terms of assembly, the glycine cleavage system is composed of four proteins: P, T, L and H.

It carries out the reaction N(6)-[(R)-S(8)-aminomethyldihydrolipoyl]-L-lysyl-[protein] + (6S)-5,6,7,8-tetrahydrofolate = N(6)-[(R)-dihydrolipoyl]-L-lysyl-[protein] + (6R)-5,10-methylene-5,6,7,8-tetrahydrofolate + NH4(+). Functionally, the glycine cleavage system catalyzes the degradation of glycine. The polypeptide is Aminomethyltransferase (Bacillus cereus (strain 03BB102)).